The following is a 432-amino-acid chain: Amino acid transporter ANT1 (432 aa).

The disordered stretch occupies residues 1 to 30; sequence MAIKDLTATTGDSSLPLIKSPPSETTGGDR. The Cytoplasmic segment spans residues 1 to 35; sequence MAIKDLTATTGDSSLPLIKSPPSETTGGDRTSALQ. A helical membrane pass occupies residues 36–56; sequence TLGNIIVSIVGTGVLGLPYAF. The Lumenal portion of the chain corresponds to 57-62; sequence RIAGWL. The helical transmembrane segment at 63–83 threads the bilayer; the sequence is AGSLGVIIVGFATYYCMLLLI. Residues 84 to 115 lie on the Cytoplasmic side of the membrane; sequence QCRDKLESEEGEEESKTYGDLGFKCMGTKGRY. The helical transmembrane segment at 116 to 136 threads the bilayer; the sequence is LTEFLIFTAQCGGSVAYLVFI. Over 137–147 the chain is Lumenal; sequence GRNLSSIFSSY. The chain crosses the membrane as a helical span at residues 148–168; sequence GLSMVSFILILVPIEVGLSWI. At 169–172 the chain is on the cytoplasmic side; sequence TSLS. A helical membrane pass occupies residues 173–193; that stretch reads ALSPFSIFADICNIIAMCFVV. The Lumenal segment spans residues 194–219; sequence KENVEMVIEGDFSFSDRTAISSTIGG. Residues 220–240 traverse the membrane as a helical segment; it reads LPFAGGVAVFCFEGFAMTLAL. The Cytoplasmic portion of the chain corresponds to 241–256; the sequence is ESSMREREAFPKLLAK. Residues 257-277 traverse the membrane as a helical segment; it reads VLAGITFVYVLFGFCGYMAYG. Residues 278–292 are Lumenal-facing; the sequence is DQTKDIITLNLPNNW. Residues 293–313 form a helical membrane-spanning segment; that stretch reads SAIAVQIGLCVGLTFTFPIMV. At 314–353 the chain is on the cytoplasmic side; sequence HPLNEIIEQKLKRIDWLQKHHNGYSNETGSVSKFAIFTTR. The chain crosses the membrane as a helical span at residues 354–374; that stretch reads TLLVVGLAAIASLVPGFGTFA. The Lumenal segment spans residues 375–379; it reads SLVGS. Residues 380–400 form a helical membrane-spanning segment; it reads TLCALISFVLPASYHLTLLGP. Residues 401–410 lie on the Cytoplasmic side of the membrane; the sequence is SLNVWNKSID. The chain crosses the membrane as a helical span at residues 411–431; it reads VFIVICGLIFAVYGTYNTIVG. Residue V432 is a topological domain, lumenal.

This sequence belongs to the amino acid/polyamine transporter 2 family. Amino acid/auxin permease (AAAP) (TC 2.A.18.8) subfamily. Ubiquitous. Highly expressed in flowers and cauline leaves and at lower levels in stems, leaves and roots.

The protein localises to the endoplasmic reticulum membrane. Translocates aromatic and neutral amino acids such as tyrosine, tryptophan, phenylalanine, histidine, proline, leucine, valine, glutamine, as well as arginine. Transports the auxins indole-3-acetic acid (IAA) and 2,4-dichlorophenoxyacetic acid (2,4-D). This chain is Amino acid transporter ANT1, found in Arabidopsis thaliana (Mouse-ear cress).